The primary structure comprises 433 residues: Homogentisate 1,2-dioxygenase (433 aa).

The active-site Proton acceptor is H288. Residues H331 and E337 each contribute to the Fe cation site. Positions 346 and 367 each coordinate homogentisate. Fe cation is bound at residue H367.

Belongs to the homogentisate dioxygenase family. Hexamer; dimer of trimers. Requires Fe cation as cofactor.

The enzyme catalyses homogentisate + O2 = 4-maleylacetoacetate + H(+). Its pathway is amino-acid degradation; L-phenylalanine degradation; acetoacetate and fumarate from L-phenylalanine: step 4/6. Functionally, involved in the catabolism of homogentisate (2,5-dihydroxyphenylacetate or 2,5-OH-PhAc), a central intermediate in the degradation of phenylalanine and tyrosine. Catalyzes the oxidative ring cleavage of the aromatic ring of homogentisate to yield maleylacetoacetate. The chain is Homogentisate 1,2-dioxygenase from Pseudomonas putida (strain W619).